Here is a 295-residue protein sequence, read N- to C-terminus: MADLDDIKEGKDFGIDRPQQNTLYTLKGCGSLDWGMQSRLARIFNPHSNRTVMLAFDHGYFQGPTTGLERIDLSIAPLFADTDVLMCTRGVLRSQVPAATNKPVVLRASGGNSILSELSNECVAVAMEDALRLNVCAVAAQVYIGSEYEHQSINNIIKLVDAGNRYGMPVLAVTGVGKEMTRDARYFSLASRIAAEMGAQFVKTYFVEEGFEKVTASCPVPIVIAGGKKLPEHEALEMCWRAIDQGASGVDMGRNIFQSSAPRAMLKAVKKVVHENLNAREAYQFWQEEKQGELK.

Lys203 (schiff-base intermediate with substrate) is an active-site residue.

The protein belongs to the DeoC/FbaB aldolase family. In terms of assembly, homodecamer.

The protein resides in the cytoplasm. The enzyme catalyses dihydroxyacetone phosphate + acetyl-CoA = 3-hydroxy-2,4-dioxopentyl phosphate + CoA. In terms of biological role, involved in the degradation of phospho-AI-2, thereby terminating induction of the lsr operon and closing the AI-2 signaling cycle. Catalyzes the transfer of an acetyl moiety from 3-hydroxy-5-phosphonooxypentane-2,4-dione to CoA to form glycerone phosphate and acetyl-CoA. This is 3-hydroxy-5-phosphonooxypentane-2,4-dione thiolase from Klebsiella pneumoniae subsp. pneumoniae (strain ATCC 700721 / MGH 78578).